The chain runs to 94 residues: DNA-directed RNA polymerase subunit omega (94 aa).

It belongs to the RNA polymerase subunit omega family. As to quaternary structure, the RNAP catalytic core consists of 2 alpha, 1 beta, 1 beta' and 1 omega subunit. When a sigma factor is associated with the core the holoenzyme is formed, which can initiate transcription.

It carries out the reaction RNA(n) + a ribonucleoside 5'-triphosphate = RNA(n+1) + diphosphate. Its function is as follows. Promotes RNA polymerase assembly. Latches the N- and C-terminal regions of the beta' subunit thereby facilitating its interaction with the beta and alpha subunits. In Shewanella pealeana (strain ATCC 700345 / ANG-SQ1), this protein is DNA-directed RNA polymerase subunit omega.